A 308-amino-acid chain; its full sequence is Aspartate carbamoyltransferase catalytic subunit (308 aa).

Residues Arg-55 and Thr-56 each coordinate carbamoyl phosphate. Lys-83 contacts L-aspartate. 3 residues coordinate carbamoyl phosphate: Arg-105, His-133, and Gln-136. L-aspartate is bound by residues Arg-166 and Arg-220. Residues Gly-261 and Pro-262 each contribute to the carbamoyl phosphate site.

The protein belongs to the aspartate/ornithine carbamoyltransferase superfamily. ATCase family. As to quaternary structure, heterododecamer (2C3:3R2) of six catalytic PyrB chains organized as two trimers (C3), and six regulatory PyrI chains organized as three dimers (R2).

The enzyme catalyses carbamoyl phosphate + L-aspartate = N-carbamoyl-L-aspartate + phosphate + H(+). It participates in pyrimidine metabolism; UMP biosynthesis via de novo pathway; (S)-dihydroorotate from bicarbonate: step 2/3. Its function is as follows. Catalyzes the condensation of carbamoyl phosphate and aspartate to form carbamoyl aspartate and inorganic phosphate, the committed step in the de novo pyrimidine nucleotide biosynthesis pathway. The protein is Aspartate carbamoyltransferase catalytic subunit of Chlorobaculum parvum (strain DSM 263 / NCIMB 8327) (Chlorobium vibrioforme subsp. thiosulfatophilum).